The chain runs to 769 residues: Serine protease HtrA-like (769 aa).

The segment covering 1–20 (MDIGKKHVIPKSQYRRKRRE) has biased composition (basic residues). The disordered stretch occupies residues 1 to 390 (MDIGKKHVIP…ATSKLNKGRA (390 aa)). Basic and acidic residues-rich tracts occupy residues 21–64 (FFHN…ERFK) and 71–108 (LEQR…DVSK). Polar residues predominate over residues 126 to 137 (YEQNSEATLSTK). Residues 138–186 (STDKVESTDMRKLSSDKNKVGHEEQHVLSKPSEHDKETRIDFESSRTDS) are compositionally biased toward basic and acidic residues. Residues 247-262 (QQSQNEQTKTYTYGDS) show a composition bias toward polar residues. Composition is skewed to basic and acidic residues over residues 264-296 (QNDK…HIVD) and 310-330 (KTDD…HKQN). The span at 331-347 (ADSSETVGYQSQSSASH) shows a compositional bias: polar residues. Positions 348–364 (RITEKRNNAINDHDKLN) are enriched in basic and acidic residues. Polar residues predominate over residues 366 to 390 (QKPNAKTSANNNQKKATSKLNKGRA). The helical transmembrane segment at 410 to 430 (LVILMGIIILIVILNAIFNNV) threads the bilayer. Active-site charge relay system residues include His504, Asp534, and Ser619. One can recognise a PDZ domain in the interval 680 to 733 (IASLNSFERQAVKLPGKVKNGVVVDQVDNNGLADQSGLKKGDVITELDGKLLED).

The protein belongs to the peptidase S1C family.

The protein resides in the cell membrane. The protein is Serine protease HtrA-like of Staphylococcus aureus (strain MSSA476).